A 617-amino-acid chain; its full sequence is V-type proton ATPase catalytic subunit A (617 aa).

Residue 257-264 (GAFGCGKT) coordinates ATP.

The protein belongs to the ATPase alpha/beta chains family. In terms of assembly, V-ATPase is a heteromultimeric enzyme composed of a peripheral catalytic V1 complex (components A to H) attached to an integral membrane V0 proton pore complex (components: a, c, c', c'', d, e, f and VOA1). Post-translationally, is a probable target for sumoylation.

Its subcellular location is the vacuole membrane. It carries out the reaction ATP + H2O + 4 H(+)(in) = ADP + phosphate + 5 H(+)(out). In terms of biological role, catalytic subunit of the V1 complex of vacuolar(H+)-ATPase (V-ATPase), a multisubunit enzyme composed of a peripheral complex (V1) that hydrolyzes ATP and a membrane integral complex (V0) that translocates protons. V-ATPase is responsible for acidifying and maintaining the pH of intracellular compartments. Mediates oxidative stress response, filamentous growth, and plays an important role in virulence. The sequence is that of V-type proton ATPase catalytic subunit A from Candida albicans (strain SC5314 / ATCC MYA-2876) (Yeast).